A 944-amino-acid polypeptide reads, in one-letter code: Probable UDP-N-acetylglucosamine--peptide N-acetylglucosaminyltransferase SPINDLY (944 aa).

TPR repeat units follow at residues 34 to 67, 68 to 101, 102 to 135, 143 to 176, 177 to 210, 211 to 244, 252 to 285, 286 to 319, 320 to 353, 355 to 387, and 388 to 421; these read GTDA…DGAN, VEAL…DPKN, ACAL…DPSY, AIVL…DSHY, APAY…RPLY, AEAY…SPNF, AIAL…NWHY, ADAM…NPRC, AEAC…KPNF, QSLN…NPTY, and AEAY…DPDS. Residues 422–944 are catalytic region; that stretch reads RNAGQNRLLA…RCEANGHSSR (523 aa). A disordered region spans residues 873-944; sequence NATAEEDNQS…RCEANGHSSR (72 aa). Residues 897–911 are compositionally biased toward polar residues; that stretch reads PQPQIMVNGVTSPEG.

It belongs to the glycosyltransferase 41 family. O-GlcNAc transferase subfamily. As to expression, expressed in all parts of plants, including immature leaf blade, leaf sheath, mature leaf blade, roots, germinating embryos and aleurone layers.

The protein resides in the nucleus. It carries out the reaction L-seryl-[protein] + UDP-N-acetyl-alpha-D-glucosamine = 3-O-(N-acetyl-beta-D-glucosaminyl)-L-seryl-[protein] + UDP + H(+). The enzyme catalyses L-threonyl-[protein] + UDP-N-acetyl-alpha-D-glucosamine = 3-O-(N-acetyl-beta-D-glucosaminyl)-L-threonyl-[protein] + UDP + H(+). It functions in the pathway protein modification; protein glycosylation. Functionally, probable O-linked N-acetylglucosamine transferase (OGT) involved in various processes such as gibberellin (GA) signaling pathway. OGTs catalyze the addition of nucleotide-activated sugars directly onto the polypeptide through O-glycosidic linkage with the hydroxyl of serine or threonine. Probably acts by adding O-linked sugars to yet unknown proteins. The protein is Probable UDP-N-acetylglucosamine--peptide N-acetylglucosaminyltransferase SPINDLY (SPY) of Hordeum vulgare (Barley).